A 591-amino-acid polypeptide reads, in one-letter code: Splicing factor U2af large subunit A (591 aa).

The interval 1 to 215 (MAEHDAPPES…QSKRMSGFDQ (215 aa)) is disordered. Residues 27–36 (SPQQDAQPLS) are compositionally biased toward polar residues. Basic and acidic residues-rich tracts occupy residues 37–79 (SRDR…SRDR) and 157–191 (RERSERREHRDRSDDRDYRRSCDRDAERRDRDRDG). RRM domains lie at 272–355 (RRVY…RPTD) and 392–470 (DRIF…RANQ).

Belongs to the splicing factor SR family.

The protein localises to the nucleus. Necessary for the splicing of pre-mRNA. This Triticum aestivum (Wheat) protein is Splicing factor U2af large subunit A (U2AF65A).